We begin with the raw amino-acid sequence, 348 residues long: Erlin-1 (348 aa).

Residues 1–7 (MNMTQAR) are Cytoplasmic-facing. A helical membrane pass occupies residues 8–28 (LLVAAVVGLVAILLYASIHKI). At 29-348 (EEGHLAVYYR…SPIQNKENAG (320 aa)) the chain is on the lumenal side. N-linked (GlcNAc...) asparagine glycosylation is present at Asn-108. Residue Lys-269 is modified to N6-acetyllysine. Basic and acidic residues predominate over residues 318–336 (DGRTGREDSLPPEEAREPS). The interval 318–348 (DGRTGREDSLPPEEAREPSGESPIQNKENAG) is disordered. A compositionally biased stretch (polar residues) spans 339-348 (SPIQNKENAG).

The protein belongs to the band 7/mec-2 family. As to quaternary structure, forms a heteromeric complex with ERLIN2. In complex with ERLIN2, interacts with RNF170. Interacts with AMFR and SYVN1. Post-translationally, deubiquitinated by USP25; leading to stabilization.

It is found in the endoplasmic reticulum membrane. Component of the ERLIN1/ERLIN2 complex which mediates the endoplasmic reticulum-associated degradation (ERAD) of inositol 1,4,5-trisphosphate receptors (IP3Rs). Involved in regulation of cellular cholesterol homeostasis by regulation the SREBP signaling pathway. Binds cholesterol and may promote ER retention of the SCAP-SREBF complex. This is Erlin-1 from Mus musculus (Mouse).